Consider the following 293-residue polypeptide: 4-hydroxybenzoate octaprenyltransferase (293 aa).

7 helical membrane passes run 25 to 45 (IGNFLLLWPMLWGLWIAAKGL), 48 to 68 (LKVLVVFVLGVLIMRAAGCVI), 101 to 121 (LFVVLCLVAFGLVLLMNPLTI), 142 to 162 (HFPQVHLGAAFGWAIPMAFAA), 165 to 185 (GAVAPVAWLLFLSAVLWATIY), 223 to 243 (VMLAVLVAAGLVVGLGAFWYL), and 271 to 291 (FLNNNWLGGLIFLGLLLDLHL).

Belongs to the UbiA prenyltransferase family. Mg(2+) serves as cofactor.

It is found in the cell inner membrane. The catalysed reaction is all-trans-octaprenyl diphosphate + 4-hydroxybenzoate = 4-hydroxy-3-(all-trans-octaprenyl)benzoate + diphosphate. Its pathway is cofactor biosynthesis; ubiquinone biosynthesis. Functionally, catalyzes the prenylation of para-hydroxybenzoate (PHB) with an all-trans polyprenyl group. Mediates the second step in the final reaction sequence of ubiquinone-8 (UQ-8) biosynthesis, which is the condensation of the polyisoprenoid side chain with PHB, generating the first membrane-bound Q intermediate 3-octaprenyl-4-hydroxybenzoate. This chain is 4-hydroxybenzoate octaprenyltransferase, found in Alkalilimnicola ehrlichii (strain ATCC BAA-1101 / DSM 17681 / MLHE-1).